Consider the following 392-residue polypeptide: uncharacterized protein (392 aa).

The N-terminal 34 residues, 1–34 (MCISSSSLLCGINSLKYASNRVGILIPPFQTASS), are a transit peptide targeting the mitochondrion. The next 8 helical transmembrane spans lie at 115–135 (VAIM…WHWD), 150–172 (FRFM…WWTL), 185–205 (LLVN…KFGV), 208–225 (ALSV…VALQ), 277–297 (ATFV…AVYA), 299–319 (AAIF…VYPV), 321–341 (AGIF…LNYE), and 350–370 (AHVS…PAMW). Serine 292 (nucleophile) is an active-site residue. The active site involves histidine 351.

Belongs to the peptidase S54 family.

Its subcellular location is the mitochondrion inner membrane. This is an uncharacterized protein from Schizosaccharomyces pombe (strain 972 / ATCC 24843) (Fission yeast).